Reading from the N-terminus, the 223-residue chain is Voltage-dependent calcium channel gamma-1 subunit (223 aa).

Over 1–10 (MSQTKTLKVR) the chain is Cytoplasmic. A helical transmembrane segment spans residues 11–29 (VALLCILVGIVLALVAVVT). Residues 30–109 (DHWAVLSPHV…TQKEYSISAA (80 aa)) are Extracellular-facing. 2 N-linked (GlcNAc...) asparagine glycosylation sites follow: Asn-43 and Asn-80. A disulfide bridge links Cys-57 with Cys-81. Residues 110–130 (AIAIFSLGFIIVGTLCALLSF) traverse the membrane as a helical segment. Residues 131 to 135 (RKKRD) lie on the Cytoplasmic side of the membrane. A helical membrane pass occupies residues 136–156 (YLLRPASMFYIFAGLCLSVSA). Over 157–180 (EVMRQSVQRMVDSEHTAWIAHSLA) the chain is Extracellular. Residues 181–205 (WSFICACVAAALLLVGGLALLLLAL) traverse the membrane as a helical segment. Residues 206-223 (PRMPRDPWESCMDAEPEH) lie on the Cytoplasmic side of the membrane.

Belongs to the PMP-22/EMP/MP20 family. CACNG subfamily. Component of a calcium channel complex consisting of a pore-forming alpha subunit (CACNA1S) and the ancillary subunits CACNB1 or CACNB2, CACNG1 and CACNA2D1. The channel complex contains alpha, beta, gamma and delta subunits in a 1:1:1:1 ratio, i.e. it contains either CACNB1 or CACNB2. N-glycosylated.

Its subcellular location is the cell membrane. The protein resides in the sarcolemma. Its function is as follows. Regulatory subunit of the voltage-gated calcium channel that gives rise to L-type calcium currents in skeletal muscle. Regulates channel inactivation kinetics. In Bos taurus (Bovine), this protein is Voltage-dependent calcium channel gamma-1 subunit (CACNG1).